Reading from the N-terminus, the 256-residue chain is Alcohol dehydrogenase (256 aa).

Residue 12-41 (FVAGLGGIGLDTTKELLKRDLKNLVILDRI) coordinates NAD(+). Ser140 provides a ligand contact to substrate. Tyr153 acts as the Proton acceptor in catalysis.

It belongs to the short-chain dehydrogenases/reductases (SDR) family. As to quaternary structure, homodimer.

The enzyme catalyses a primary alcohol + NAD(+) = an aldehyde + NADH + H(+). The catalysed reaction is a secondary alcohol + NAD(+) = a ketone + NADH + H(+). The polypeptide is Alcohol dehydrogenase (Drosophila ananassae (Fruit fly)).